The chain runs to 111 residues: Small ribosomal subunit protein bS16 (111 aa).

It belongs to the bacterial ribosomal protein bS16 family.

This chain is Small ribosomal subunit protein bS16, found in Rickettsia felis (strain ATCC VR-1525 / URRWXCal2) (Rickettsia azadi).